The chain runs to 188 residues: Probable RNA-binding protein 18 (188 aa).

An RRM domain is found at 23–104 (HRLWIGNIDP…KKLVVRWAHA (82 aa)). Residues 151–188 (EENPDDYSGPSAYTYNKPPDKREKRSQPYHKHFRKHRR) form a disordered region. The span at 177-188 (QPYHKHFRKHRR) shows a compositional bias: basic residues.

The polypeptide is Probable RNA-binding protein 18 (rbm18) (Danio rerio (Zebrafish)).